The primary structure comprises 148 residues: Large ribosomal subunit protein bL9 (148 aa).

It belongs to the bacterial ribosomal protein bL9 family.

Its function is as follows. Binds to the 23S rRNA. The polypeptide is Large ribosomal subunit protein bL9 (Solibacter usitatus (strain Ellin6076)).